Reading from the N-terminus, the 299-residue chain is Cold shock protein 1 (299 aa).

Ala2 is subject to N-acetylalanine. The region spanning 12 to 76 (TGKVNWFNAS…GKTKAVNVTA (65 aa)) is the CSD domain. Residues 76 to 97 (APGGGSLKKENNSRGNGARRGG) form a disordered region. 7 CCHC-type zinc fingers span residues 100–117 (SGCY…DCGI), 132–149 (EGCY…DCTS), 164–181 (DGCY…DCTQ), 198–215 (DGCY…DCTQ), 230–247 (GTCY…DCAT), 253–270 (RGCY…DCDQ), and 280–297 (NACY…ECSS).

This sequence belongs to the cold shock protein (CSP) family. In terms of tissue distribution, mostly expressed in shoot apices and siliques, and, to a lower extent, in roots, cotyledons, stems, shoots, leaves, floral buds and flowers.

Its subcellular location is the nucleus. The protein resides in the cytoplasm. Functionally, chaperone that binds to RNA, single- (ssDNA) and double-stranded (dsDNA) DNA, and unwinds nucleic acid duplex. Exhibits a DNA melting activity. May be involved in cold resistance. Prevents seed germination under dehydration or salt stress conditions. In Arabidopsis thaliana (Mouse-ear cress), this protein is Cold shock protein 1 (CSP1).